Here is a 204-residue protein sequence, read N- to C-terminus: Putative AgrB-like protein (204 aa).

Helical transmembrane passes span 51–73 (VYGI…SYLW), 87–107 (LNCT…FQNI), 111–131 (NWIV…FAPA), 151–168 (AMIG…IPFA), and 173–190 (LIMV…PLTY).

This sequence belongs to the AgrB family.

Its subcellular location is the cell membrane. Functionally, may be involved in the proteolytic processing of a quorum sensing system signal molecule precursor. This is Putative AgrB-like protein from Listeria innocua serovar 6a (strain ATCC BAA-680 / CLIP 11262).